The chain runs to 306 residues: Ubiquitin-conjugating enzyme E2Q-like protein CG4502 (306 aa).

Residues 18 to 77 form a disordered region; sequence HKSSNNNNNNNNNHNNNINNNNNNDKVDGATGSSPNINNNNNNNNNNNNHDGAAAPSSAG. Low complexity-rich tracts occupy residues 22–41 and 53–77; these read NNNNNNNNNHNNNINNNNNN and NINNNNNNNNNNNNHDGAAAPSSAG. The region spanning 138–299 is the UBC core domain; sequence IRTRRLMKEY…VKTHEKYGWV (162 aa). The active-site Glycyl thioester intermediate is the cysteine 234.

Belongs to the ubiquitin-conjugating enzyme family.

It carries out the reaction S-ubiquitinyl-[E1 ubiquitin-activating enzyme]-L-cysteine + [E2 ubiquitin-conjugating enzyme]-L-cysteine = [E1 ubiquitin-activating enzyme]-L-cysteine + S-ubiquitinyl-[E2 ubiquitin-conjugating enzyme]-L-cysteine.. It functions in the pathway protein modification; protein ubiquitination. Its function is as follows. Catalyzes the covalent attachment of ubiquitin to other proteins. The protein is Ubiquitin-conjugating enzyme E2Q-like protein CG4502 of Drosophila melanogaster (Fruit fly).